The sequence spans 310 residues: Glutaminase 1 (310 aa).

Residues serine 66, asparagine 117, glutamate 161, asparagine 168, tyrosine 192, tyrosine 244, and valine 262 each coordinate substrate. Residue lysine 294 is modified to N6-acetyllysine.

It belongs to the glutaminase family. Homotetramer.

It catalyses the reaction L-glutamine + H2O = L-glutamate + NH4(+). This chain is Glutaminase 1, found in Escherichia coli O157:H7.